A 500-amino-acid polypeptide reads, in one-letter code: NAD(P)H-quinone oxidoreductase chain 4, chloroplastic (500 aa).

Helical transmembrane passes span 4–24 (FPWLTLIVVLPISAGSLIFFL), 37–57 (IFICMLELLLTTYVFCYHFQL), 87–107 (IGPILLTGFITTLATLAAWPV), 113–130 (LFHFLMLAMYSGQIGSFS), 134–154 (LLLFFIMWELELIPVYLLLSM), 167–187 (FILYTAGGSIFLLLGVLGIGL), 208–228 (ALEIIFYIGFFIAFAVKSPII), 242–262 (HYSTCMLLAGILLKMGAYGLV), 272–292 (AHSIFSPWLVVVGTMQIIYAA), 305–325 (IAYSSVSHMGFIIIGIGSITD), 330–350 (GAILQIISHGFLGAALFFLAG), 386–406 (LALPGMSGFVAELIVFFGIIT), 416–436 (ILITFVMAIGMILTPIYSLSM), and 462–482 (LFVLISIFLPVIGIGIYPDFV).

This sequence belongs to the complex I subunit 4 family.

Its subcellular location is the plastid. It localises to the chloroplast thylakoid membrane. It catalyses the reaction a plastoquinone + NADH + (n+1) H(+)(in) = a plastoquinol + NAD(+) + n H(+)(out). It carries out the reaction a plastoquinone + NADPH + (n+1) H(+)(in) = a plastoquinol + NADP(+) + n H(+)(out). The polypeptide is NAD(P)H-quinone oxidoreductase chain 4, chloroplastic (Vitis vinifera (Grape)).